The following is a 205-amino-acid chain: Golgi to ER traffic protein 1 (205 aa).

At Met-1–Tyr-3 the chain is on the lumenal side. A helical transmembrane segment spans residues Trp-4–Leu-24. Over Ala-25–Lys-96 the chain is Cytoplasmic. The stretch at Glu-32–Lys-96 forms a coiled coil. The helical transmembrane segment at Leu-97–Tyr-117 threads the bilayer. At Ala-118–Ala-156 the chain is on the lumenal side. A helical transmembrane segment spans residues Val-157–Ile-173. Topologically, residues Glu-174–Asn-205 are cytoplasmic.

It belongs to the WRB/GET1 family. Component of the Golgi to ER traffic (GET) complex, which is composed of GET1, GET2 and GET3. Within the complex, GET1 and GET2 form a heterotetramer which is stabilized by phosphatidylinositol binding and which binds to the GET3 homodimer.

Its subcellular location is the endoplasmic reticulum membrane. It localises to the golgi apparatus membrane. Required for the post-translational delivery of tail-anchored (TA) proteins to the endoplasmic reticulum. Together with GET2, acts as a membrane receptor for soluble GET3, which recognizes and selectively binds the transmembrane domain of TA proteins in the cytosol. The GET complex cooperates with the HDEL receptor ERD2 to mediate the ATP-dependent retrieval of resident ER proteins that contain a C-terminal H-D-E-L retention signal from the Golgi to the ER. The chain is Golgi to ER traffic protein 1 from Eremothecium gossypii (strain ATCC 10895 / CBS 109.51 / FGSC 9923 / NRRL Y-1056) (Yeast).